The following is a 391-amino-acid chain: Formate-dependent phosphoribosylglycinamide formyltransferase (391 aa).

Residues 20 to 21 (EL) and Glu-80 contribute to the N(1)-(5-phospho-beta-D-ribosyl)glycinamide site. Residues Arg-112, Lys-153, 158 to 163 (SSGKGQ), 193 to 196 (EGFV), and Glu-201 each bind ATP. The 190-residue stretch at 117–306 (RLAAEELQLP…EFALHVRAFT (190 aa)) folds into the ATP-grasp domain. 2 residues coordinate Mg(2+): Glu-265 and Glu-277. N(1)-(5-phospho-beta-D-ribosyl)glycinamide-binding positions include Asp-284, Lys-354, and 361–362 (RR).

The protein belongs to the PurK/PurT family. Homodimer.

It carries out the reaction N(1)-(5-phospho-beta-D-ribosyl)glycinamide + formate + ATP = N(2)-formyl-N(1)-(5-phospho-beta-D-ribosyl)glycinamide + ADP + phosphate + H(+). Its pathway is purine metabolism; IMP biosynthesis via de novo pathway; N(2)-formyl-N(1)-(5-phospho-D-ribosyl)glycinamide from N(1)-(5-phospho-D-ribosyl)glycinamide (formate route): step 1/1. In terms of biological role, involved in the de novo purine biosynthesis. Catalyzes the transfer of formate to 5-phospho-ribosyl-glycinamide (GAR), producing 5-phospho-ribosyl-N-formylglycinamide (FGAR). Formate is provided by PurU via hydrolysis of 10-formyl-tetrahydrofolate. This chain is Formate-dependent phosphoribosylglycinamide formyltransferase, found in Aliivibrio fischeri (strain ATCC 700601 / ES114) (Vibrio fischeri).